Here is a 292-residue protein sequence, read N- to C-terminus: ATP synthase gamma chain (292 aa).

This sequence belongs to the ATPase gamma chain family. In terms of assembly, F-type ATPases have 2 components, CF(1) - the catalytic core - and CF(0) - the membrane proton channel. CF(1) has five subunits: alpha(3), beta(3), gamma(1), delta(1), epsilon(1). CF(0) has three main subunits: a, b and c.

The protein resides in the cell inner membrane. In terms of biological role, produces ATP from ADP in the presence of a proton gradient across the membrane. The gamma chain is believed to be important in regulating ATPase activity and the flow of protons through the CF(0) complex. The polypeptide is ATP synthase gamma chain (Nitrobacter hamburgensis (strain DSM 10229 / NCIMB 13809 / X14)).